The primary structure comprises 155 residues: DNA gyrase inhibitor (155 aa).

Belongs to the DNA gyrase inhibitor family. In terms of assembly, interacts with DNA gyrase.

It is found in the cytoplasm. Inhibits the supercoiling activity of DNA gyrase. Acts by inhibiting DNA gyrase at an early step, prior to (or at the step of) binding of DNA by the gyrase. It protects cells against toxins that target DNA gyrase, by inhibiting activity of these toxins and reducing the formation of lethal double-strand breaks in the cell. This is DNA gyrase inhibitor from Edwardsiella piscicida.